A 338-amino-acid polypeptide reads, in one-letter code: Glycerol-3-phosphate dehydrogenase [NAD(P)+] (338 aa).

Positions 13, 14, and 108 each coordinate NADPH. Sn-glycerol 3-phosphate-binding residues include Lys-108, Gly-139, and Ser-141. Residue Ala-143 coordinates NADPH. The sn-glycerol 3-phosphate site is built by Lys-194, Asp-247, Ser-257, Arg-258, and Asn-259. Residue Lys-194 is the Proton acceptor of the active site. NADPH is bound at residue Arg-258. Positions 282 and 284 each coordinate NADPH.

This sequence belongs to the NAD-dependent glycerol-3-phosphate dehydrogenase family.

Its subcellular location is the cytoplasm. It catalyses the reaction sn-glycerol 3-phosphate + NAD(+) = dihydroxyacetone phosphate + NADH + H(+). It carries out the reaction sn-glycerol 3-phosphate + NADP(+) = dihydroxyacetone phosphate + NADPH + H(+). It participates in membrane lipid metabolism; glycerophospholipid metabolism. In terms of biological role, catalyzes the reduction of the glycolytic intermediate dihydroxyacetone phosphate (DHAP) to sn-glycerol 3-phosphate (G3P), the key precursor for phospholipid synthesis. In Streptococcus pyogenes serotype M28 (strain MGAS6180), this protein is Glycerol-3-phosphate dehydrogenase [NAD(P)+].